A 288-amino-acid polypeptide reads, in one-letter code: uncharacterized protein (288 aa).

To M.bovis Mb1522c, M.leprae ML1804 and M.avium MAV321.

This is an uncharacterized protein from Mycobacterium tuberculosis (strain CDC 1551 / Oshkosh).